A 570-amino-acid polypeptide reads, in one-letter code: DNA polymerase/3'-5' exonuclease PolX (570 aa).

The interval 1–315 is DNA polymerase type-X; sequence MHKKDIIRLL…PLIPPEIRES (315 aa). Positions 193, 195, and 240 each coordinate a divalent metal cation. The 3'-5' exonuclease stretch occupies residues 333–570; that stretch reads QIKGDLHMHS…DVEAFLKRND (238 aa). Mn(2+) is bound by residues His-339, His-341, His-371, Glu-410, His-437, His-465, Asp-526, and His-528.

In the N-terminal section; belongs to the DNA polymerase type-X family. It in the C-terminal section; belongs to the PHP family. As to quaternary structure, monomer. Mn(2+) serves as cofactor. Mg(2+) is required as a cofactor.

The enzyme catalyses DNA(n) + a 2'-deoxyribonucleoside 5'-triphosphate = DNA(n+1) + diphosphate. It catalyses the reaction Exonucleolytic cleavage in the 3'- to 5'-direction to yield nucleoside 5'-phosphates.. With respect to regulation, the polymerization activity is inhibited in the presence of 2'-3'-dideoxynucleoside 5'-triphosphate (ddNTP). In terms of biological role, strictly DNA-template-directed DNA polymerase, preferentially acting on DNA structures containing gaps from one to a few nucleotides and bearing a phosphate group at the 5' end of the downstream DNA. The fact that PolX is able to conduct filling of a single-nucleotide gap, allowing further sealing of the resulting nick by a DNA ligase, points to a putative role in base excision repair (BER) during the B.subtilis life cycle. Moreover, also possesses a 3'-5' exonuclease activity able to edit unpaired 3'-termini in a gapped DNA substrate and likely involved in resecting unannealed 3'-termini during DNA repair. The same PolX molecule could perform the subsequent gap-filling step. Does not display 5'-deoxyribose 5'-phosphate (dRP) lyase activity, as predicted by the lack of the lysine and tyrosine residues responsible for the dRP lyase activity in some other PolX members. In Bacillus subtilis (strain 168), this protein is DNA polymerase/3'-5' exonuclease PolX (polX).